Reading from the N-terminus, the 451-residue chain is Secreted RxLR effector protein 111 (451 aa).

Residues 1 to 19 form the signal peptide; that stretch reads MRGTLATALLLVASCRIAA. The short motif at 48-69 is the RxLR-dEER element; it reads RFLRDNREQRVALALTAANESR. N-linked (GlcNAc...) asparagine glycosylation occurs at asparagine 66. Composition is skewed to polar residues over residues 175 to 184 and 413 to 426; these read RKTLSKTQFK and SPASQSRSNNQRTG. Disordered regions lie at residues 175–194 and 404–451; these read RKTLSKTQFKNPAASKSTKR and IPLQ…NKHA. Residues 437-451 are compositionally biased toward basic and acidic residues; it reads PERDSFRHIESNKHA.

It belongs to the RxLR effector family.

The protein resides in the secreted. Its subcellular location is the host nucleus. In terms of biological role, secreted effector that acts as an elicitor that induces cell death in host plant cells. This Plasmopara viticola (Downy mildew of grapevine) protein is Secreted RxLR effector protein 111.